Here is a 273-residue protein sequence, read N- to C-terminus: Putative pyruvate, phosphate dikinase regulatory protein (273 aa).

Position 149 to 156 (149 to 156 (GPSRTSKT)) interacts with ADP.

It belongs to the pyruvate, phosphate/water dikinase regulatory protein family. PDRP subfamily.

It catalyses the reaction N(tele)-phospho-L-histidyl/L-threonyl-[pyruvate, phosphate dikinase] + ADP = N(tele)-phospho-L-histidyl/O-phospho-L-threonyl-[pyruvate, phosphate dikinase] + AMP + H(+). The enzyme catalyses N(tele)-phospho-L-histidyl/O-phospho-L-threonyl-[pyruvate, phosphate dikinase] + phosphate + H(+) = N(tele)-phospho-L-histidyl/L-threonyl-[pyruvate, phosphate dikinase] + diphosphate. Functionally, bifunctional serine/threonine kinase and phosphorylase involved in the regulation of the pyruvate, phosphate dikinase (PPDK) by catalyzing its phosphorylation/dephosphorylation. The polypeptide is Putative pyruvate, phosphate dikinase regulatory protein (Rickettsia rickettsii (strain Iowa)).